We begin with the raw amino-acid sequence, 767 residues long: Photosystem I P700 chlorophyll a apoprotein A1 (767 aa).

The tract at residues 1-22 is disordered; that stretch reads MTISPPESGEKNKKVLEDPVKA. Basic and acidic residues predominate over residues 8-22; sequence SGEKNKKVLEDPVKA. The next 8 membrane-spanning stretches (helical) occupy residues 76–99, 162–185, 201–225, 309–327, 368–391, 407–433, 455–477, and 558–576; these read IFSA…FHGA, LMAL…FHYH, LNHH…HIGA, VSHH…GHMY, RHAQ…HHMY, LGLF…IAMV, ALIS…LYIH, and LMIH…LILL. Residues Cys-600 and Cys-609 each contribute to the [4Fe-4S] cluster site. Helical transmembrane passes span 616 to 637 and 681 to 703; these read HVFL…HFSW and ISMY…MFLF. A divinylchlorophyll a'-binding site is contributed by His-692. Met-700 and Tyr-708 together coordinate divinyl chlorophyll a. A phylloquinone-binding site is contributed by Trp-709. The chain crosses the membrane as a helical span at residues 741–761; the sequence is AVGVTHFLVGGIATTWAFFHA.

The protein belongs to the PsaA/PsaB family. In terms of assembly, the PsaA/B heterodimer binds the P700 divinyl chlorophyll special pair and subsequent electron acceptors. PSI consists of a core antenna complex that captures photons, and an electron transfer chain that converts photonic excitation into a charge separation. The cyanobacterial PSI reaction center is composed of one copy each of PsaA,B,C,D,E,F,I,J,K,L,M and X, and forms trimeric complexes. Requires PSI electron transfer chain: 5 divinyl chlorophyll a, 1 divinyl chlorophyll a', 2 phylloquinones and 3 4Fe-4S clusters. PSI core antenna: 90 divinyl chlorophyll a, 22 carotenoids, 3 phospholipids and 1 galactolipid. P700 is a divinyl chlorophyll a/divinyl chlorophyll a' dimer, A0 is one or more divinyl chlorophyll a, A1 is one or both phylloquinones and FX is a shared 4Fe-4S iron-sulfur center. as cofactor.

It localises to the cellular thylakoid membrane. It carries out the reaction reduced [plastocyanin] + hnu + oxidized [2Fe-2S]-[ferredoxin] = oxidized [plastocyanin] + reduced [2Fe-2S]-[ferredoxin]. Functionally, psaA and PsaB bind P700, the primary electron donor of photosystem I (PSI), as well as the electron acceptors A0, A1 and FX. PSI is a plastocyanin/cytochrome c6-ferredoxin oxidoreductase, converting photonic excitation into a charge separation, which transfers an electron from the donor P700 chlorophyll pair to the spectroscopically characterized acceptors A0, A1, FX, FA and FB in turn. Oxidized P700 is reduced on the lumenal side of the thylakoid membrane by plastocyanin or cytochrome c6. The sequence is that of Photosystem I P700 chlorophyll a apoprotein A1 from Prochlorococcus marinus (strain AS9601).